Here is a 1047-residue protein sequence, read N- to C-terminus: Suppression of tumorigenicity 18 protein (1047 aa).

Disordered stretches follow at residues 41 to 92 (TAED…HSTA), 168 to 221 (FLIH…VPKY), and 251 to 286 (DSETERKDPQNALAEPLDGNAQPSFPDVEEEDSESL). Residues 52 to 65 (NKRKSLLMKPRHYS) are compositionally biased toward basic residues. The span at 171 to 181 (HSDDGRDKIDD) shows a compositional bias: basic and acidic residues. 2 CCHHC-type zinc fingers span residues 359-402 (PRPE…PLEI) and 403-446 (LAMH…KLAM). 8 residues coordinate Zn(2+): cysteine 368, cysteine 373, histidine 386, cysteine 392, cysteine 412, cysteine 417, histidine 430, and cysteine 436. Disordered regions lie at residues 523–563 (GRKT…SYSY) and 672–710 (YSKTHGKTEEEKEKDPVSSLENLEEKKFPGEASIPSPKP). Residues 550-563 (AHTQSPGRASSYSY) are compositionally biased toward polar residues. The span at 677–687 (GKTEEEKEKDP) shows a compositional bias: basic and acidic residues. 4 CCHHC-type zinc fingers span residues 715-758 (RDLK…LKSL), 759-802 (MAAN…GVKM), 807-850 (EEKE…QKEN), and 860-903 (KLNK…IKKG). Positions 724, 729, 742, 748, 768, 773, 786, 792, 816, 821, 834, 840, 869, 874, 887, and 893 each coordinate Zn(2+). Residues 920–992 (IESDEEIRHL…AGLSQALISS (73 aa)) adopt a coiled-coil conformation.

The protein belongs to the MYT1 family. As to expression, detected at low levels in heart, liver, kidney, skeletal muscle, pancreas, testis, ovary and prostate. Detected at even lower levels in mammary epithelial cells and breast cancer cells.

It is found in the nucleus. Its function is as follows. Repressor that binds to DNA sequences containing a bipartite element consisting of a direct repeat of the sequence 5'-AAAGTTT-3' separated by 2-9 nucleotides. Represses basal transcription activity from target promoters. Inhibits colony formation in cultured breast cancer cells. The chain is Suppression of tumorigenicity 18 protein (ST18) from Homo sapiens (Human).